Consider the following 154-residue polypeptide: Transcriptional repressor NrdR (154 aa).

The disordered stretch occupies residues 1 to 22; sequence MRCPFCGNDDTQVKDSRPTEDN. A zinc finger spans residues 3 to 34; the sequence is CPFCGNDDTQVKDSRPTEDNSAIRRRRFCPAC. The segment covering 11 to 22 has biased composition (basic and acidic residues); sequence TQVKDSRPTEDN. The ATP-cone domain occupies 49–139; sequence LTVVKSGGSR…VYKDFREVTD (91 aa).

The protein belongs to the NrdR family. It depends on Zn(2+) as a cofactor.

In terms of biological role, negatively regulates transcription of bacterial ribonucleotide reductase nrd genes and operons by binding to NrdR-boxes. The chain is Transcriptional repressor NrdR from Rhodospirillum centenum (strain ATCC 51521 / SW).